A 431-amino-acid polypeptide reads, in one-letter code: Histidinol dehydrogenase (431 aa).

NAD(+) is bound by residues tyrosine 127, glutamine 189, and asparagine 212. Serine 237, glutamine 259, and histidine 262 together coordinate substrate. Positions 259 and 262 each coordinate Zn(2+). Residues glutamate 326 and histidine 327 each act as proton acceptor in the active site. 4 residues coordinate substrate: histidine 327, aspartate 360, glutamate 414, and histidine 419. Residue aspartate 360 coordinates Zn(2+). Position 419 (histidine 419) interacts with Zn(2+).

The protein belongs to the histidinol dehydrogenase family. Zn(2+) is required as a cofactor.

It catalyses the reaction L-histidinol + 2 NAD(+) + H2O = L-histidine + 2 NADH + 3 H(+). The protein operates within amino-acid biosynthesis; L-histidine biosynthesis; L-histidine from 5-phospho-alpha-D-ribose 1-diphosphate: step 9/9. Its function is as follows. Catalyzes the sequential NAD-dependent oxidations of L-histidinol to L-histidinaldehyde and then to L-histidine. The sequence is that of Histidinol dehydrogenase from Xylella fastidiosa (strain Temecula1 / ATCC 700964).